Consider the following 210-residue polypeptide: Outer-membrane lipoprotein LolB (210 aa).

Residues 1–29 form the signal peptide; that stretch reads MSLISNNEERSLRVRYCIAIALSALLISG. Cys30 carries the N-palmitoyl cysteine lipid modification. Residue Cys30 is the site of S-diacylglycerol cysteine attachment.

It belongs to the LolB family. Monomer.

It is found in the cell outer membrane. Functionally, plays a critical role in the incorporation of lipoproteins in the outer membrane after they are released by the LolA protein. The polypeptide is Outer-membrane lipoprotein LolB (Coxiella burnetii (strain RSA 493 / Nine Mile phase I)).